Consider the following 98-residue polypeptide: Acylphosphatase (98 aa).

An Acylphosphatase-like domain is found at 12-98 (TYYVRVRGVV…ERRFERFQQQ (87 aa)). Catalysis depends on residues Arg27 and Asn45.

Belongs to the acylphosphatase family.

It catalyses the reaction an acyl phosphate + H2O = a carboxylate + phosphate + H(+). This Burkholderia vietnamiensis (strain G4 / LMG 22486) (Burkholderia cepacia (strain R1808)) protein is Acylphosphatase (acyP).